The primary structure comprises 604 residues: Elongation factor 4 (604 aa).

Residues 10-191 (KNIRNFSIIA…KIITTIPAPS (182 aa)) form the tr-type G domain. Residues 22–27 (DHGKST) and 138–141 (NKID) each bind GTP.

This sequence belongs to the TRAFAC class translation factor GTPase superfamily. Classic translation factor GTPase family. LepA subfamily.

The protein localises to the cell inner membrane. It catalyses the reaction GTP + H2O = GDP + phosphate + H(+). Required for accurate and efficient protein synthesis under certain stress conditions. May act as a fidelity factor of the translation reaction, by catalyzing a one-codon backward translocation of tRNAs on improperly translocated ribosomes. Back-translocation proceeds from a post-translocation (POST) complex to a pre-translocation (PRE) complex, thus giving elongation factor G a second chance to translocate the tRNAs correctly. Binds to ribosomes in a GTP-dependent manner. This Helicobacter acinonychis (strain Sheeba) protein is Elongation factor 4.